A 415-amino-acid polypeptide reads, in one-letter code: Trehalose synthase (415 aa).

The protein belongs to the glycosyltransferase group 1 family. Glycosyltransferase 4 subfamily. As to quaternary structure, homodimer. The cofactor is Mg(2+).

It catalyses the reaction an NDP-alpha-D-glucose + D-glucose = alpha,alpha-trehalose + a ribonucleoside 5'-diphosphate + H(+). Functionally, synthesizes trehalose from ADP-, UDP- or GDP-glucose and glucose. The sequence is that of Trehalose synthase from Pyrococcus horikoshii (strain ATCC 700860 / DSM 12428 / JCM 9974 / NBRC 100139 / OT-3).